The primary structure comprises 156 residues: ATP synthase subunit b (156 aa).

Residues 11–31 (LIAFALFVWFCMKFVWPPIIN) form a helical membrane-spanning segment.

This sequence belongs to the ATPase B chain family. In terms of assembly, F-type ATPases have 2 components, F(1) - the catalytic core - and F(0) - the membrane proton channel. F(1) has five subunits: alpha(3), beta(3), gamma(1), delta(1), epsilon(1). F(0) has three main subunits: a(1), b(2) and c(10-14). The alpha and beta chains form an alternating ring which encloses part of the gamma chain. F(1) is attached to F(0) by a central stalk formed by the gamma and epsilon chains, while a peripheral stalk is formed by the delta and b chains.

The protein localises to the cell inner membrane. Its function is as follows. F(1)F(0) ATP synthase produces ATP from ADP in the presence of a proton or sodium gradient. F-type ATPases consist of two structural domains, F(1) containing the extramembraneous catalytic core and F(0) containing the membrane proton channel, linked together by a central stalk and a peripheral stalk. During catalysis, ATP synthesis in the catalytic domain of F(1) is coupled via a rotary mechanism of the central stalk subunits to proton translocation. Functionally, component of the F(0) channel, it forms part of the peripheral stalk, linking F(1) to F(0). This is ATP synthase subunit b from Haemophilus influenzae (strain PittEE).